The primary structure comprises 488 residues: Inosine-5'-monophosphate dehydrogenase (488 aa).

2 CBS domains span residues 95-153 and 157-216; these read VISN…SIKI and MTKD…AKDE. NAD(+) contacts are provided by residues aspartate 250 and 300 to 302; that span reads GIG. K(+) contacts are provided by glycine 302 and glycine 304. Serine 305 is a binding site for IMP. Cysteine 307 is a binding site for K(+). Cysteine 307 acts as the Thioimidate intermediate in catalysis. IMP contacts are provided by residues 340–342, 363–364, and 387–391; these read DGG, GS, and YRGMG. Arginine 403 functions as the Proton acceptor in the catalytic mechanism. IMP is bound at residue glutamate 417. Positions 467-488 are disordered; that stretch reads AGLAESHPHNVQITKESPNYSF. Glutamate 471, serine 472, and histidine 473 together coordinate K(+). Polar residues predominate over residues 475–488; the sequence is HNVQITKESPNYSF.

It belongs to the IMPDH/GMPR family. In terms of assembly, homotetramer. It depends on K(+) as a cofactor.

It catalyses the reaction IMP + NAD(+) + H2O = XMP + NADH + H(+). Its pathway is purine metabolism; XMP biosynthesis via de novo pathway; XMP from IMP: step 1/1. Its activity is regulated as follows. Mycophenolic acid (MPA) is a non-competitive inhibitor that prevents formation of the closed enzyme conformation by binding to the same site as the amobile flap. In contrast, mizoribine monophosphate (MZP) is a competitive inhibitor that induces the closed conformation. MPA is a potent inhibitor of mammalian IMPDHs but a poor inhibitor of the bacterial enzymes. MZP is a more potent inhibitor of bacterial IMPDH. Functionally, catalyzes the conversion of inosine 5'-phosphate (IMP) to xanthosine 5'-phosphate (XMP), the first committed and rate-limiting step in the de novo synthesis of guanine nucleotides, and therefore plays an important role in the regulation of cell growth. The sequence is that of Inosine-5'-monophosphate dehydrogenase from Staphylococcus epidermidis (strain ATCC 35984 / DSM 28319 / BCRC 17069 / CCUG 31568 / BM 3577 / RP62A).